Here is an 83-residue protein sequence, read N- to C-terminus: Defensin-like protein 47 (83 aa).

Positions 1–27 (MGSTKTLVTCFLVIILAVSLPNNNVLA) are cleaved as a signal peptide. Disulfide bonds link Cys-40-Cys-81, Cys-44-Cys-68, Cys-53-Cys-79, and Cys-57-Cys-80.

It belongs to the DEFL family.

The protein resides in the secreted. In Arabidopsis thaliana (Mouse-ear cress), this protein is Defensin-like protein 47.